A 116-amino-acid chain; its full sequence is Non-specific lipid-transfer protein (116 aa).

The signal sequence occupies residues 1 to 25 (MAKMAMMVLCAGVTCMVVGAPYTEA). 4 disulfides stabilise this stretch: Cys-28–Cys-75, Cys-38–Cys-52, Cys-53–Cys-98, and Cys-73–Cys-112.

The protein belongs to the plant LTP family.

Its function is as follows. Plant non-specific lipid-transfer proteins transfer phospholipids as well as galactolipids across membranes. May play a role in wax or cutin deposition in the cell walls of expanding epidermal cells and certain secretory tissues. The polypeptide is Non-specific lipid-transfer protein (Helianthus annuus (Common sunflower)).